Reading from the N-terminus, the 1791-residue chain is Protein TIC 214 (1791 aa).

A run of 6 helical transmembrane segments spans residues 19 to 39 (IINS…FSIG), 68 to 88 (FIAG…HLAL), 91 to 111 (PHTI…WNNH), 133 to 153 (VFLN…SSML), 176 to 196 (VGWL…LVWI), and 227 to 247 (IFSI…PSPI). Residues 1492–1511 (ASQVELESDKENKKNPESAL) are disordered. Basic and acidic residues predominate over residues 1498 to 1511 (ESDKENKKNPESAL).

This sequence belongs to the TIC214 family. Part of the Tic complex.

The protein localises to the plastid. The protein resides in the chloroplast inner membrane. Its function is as follows. Involved in protein precursor import into chloroplasts. May be part of an intermediate translocation complex acting as a protein-conducting channel at the inner envelope. The sequence is that of Protein TIC 214 from Barbarea verna (Land cress).